A 412-amino-acid chain; its full sequence is CHRNA7-FAM7A fusion protein (412 aa).

5 helical membrane passes run 144 to 164 (GLNL…VFLL), 172 to 192 (ISLG…VAEI), 205 to 225 (QYFA…VIVL), 240 to 254 (WTRV…WFLR), and 380 to 400 (LCLM…LMSA).

This sequence belongs to the ligand-gated ion channel (TC 1.A.9) family. As to expression, expressed in hippocampus.

The protein resides in the membrane. The sequence is that of CHRNA7-FAM7A fusion protein (CHRFAM7A) from Homo sapiens (Human).